Here is a 312-residue protein sequence, read N- to C-terminus: Ribosomal protein L11 methyltransferase (312 aa).

Residues T162, G183, D205, and N248 each coordinate S-adenosyl-L-methionine.

It belongs to the methyltransferase superfamily. PrmA family.

Its subcellular location is the cytoplasm. It carries out the reaction L-lysyl-[protein] + 3 S-adenosyl-L-methionine = N(6),N(6),N(6)-trimethyl-L-lysyl-[protein] + 3 S-adenosyl-L-homocysteine + 3 H(+). In terms of biological role, methylates ribosomal protein L11. This chain is Ribosomal protein L11 methyltransferase, found in Anoxybacillus flavithermus (strain DSM 21510 / WK1).